A 366-amino-acid polypeptide reads, in one-letter code: Beta sliding clamp (366 aa).

This sequence belongs to the beta sliding clamp family. As to quaternary structure, forms a ring-shaped head-to-tail homodimer around DNA which binds and tethers DNA polymerases and other proteins to the DNA. The DNA replisome complex has a single clamp-loading complex (3 tau and 1 each of delta, delta', psi and chi subunits) which binds 3 Pol III cores (1 core on the leading strand and 2 on the lagging strand) each with a beta sliding clamp dimer. Additional proteins in the replisome are other copies of gamma, psi and chi, Ssb, DNA helicase and RNA primase.

It is found in the cytoplasm. Functionally, confers DNA tethering and processivity to DNA polymerases and other proteins. Acts as a clamp, forming a ring around DNA (a reaction catalyzed by the clamp-loading complex) which diffuses in an ATP-independent manner freely and bidirectionally along dsDNA. Initially characterized for its ability to contact the catalytic subunit of DNA polymerase III (Pol III), a complex, multichain enzyme responsible for most of the replicative synthesis in bacteria; Pol III exhibits 3'-5' exonuclease proofreading activity. The beta chain is required for initiation of replication as well as for processivity of DNA replication. This is Beta sliding clamp (dnaN) from Chlamydia muridarum (strain MoPn / Nigg).